Here is a 197-residue protein sequence, read N- to C-terminus: SIGLEC family-like protein 1 (197 aa).

Residues 118-138 (GAIYAGIVIALLFLCLLPLIV) form a helical membrane-spanning segment. Residues 160–179 (VRASQELEMSLKPEEPGKPV) are disordered. Over residues 162-176 (ASQELEMSLKPEEPG) the composition is skewed to basic and acidic residues.

It localises to the membrane. This is SIGLEC family-like protein 1 (SIGLECL1) from Homo sapiens (Human).